The primary structure comprises 258 residues: uncharacterized protein (258 aa).

The next 3 helical transmembrane spans lie at 38–58 (VFGLLIALICFSNVLCFLFIA), 72–92 (ALIFTLFIPFVTSLLANIIFI), and 111–131 (FLVICAFSSLPIVNIWLMLWW).

It localises to the cell membrane. This is an uncharacterized protein from Mycoplasma pneumoniae (strain ATCC 29342 / M129 / Subtype 1) (Mycoplasmoides pneumoniae).